The chain runs to 144 residues: Flagellar assembly factor FliW (144 aa).

This sequence belongs to the FliW family. As to quaternary structure, interacts with translational regulator CsrA and flagellin(s).

The protein localises to the cytoplasm. Functionally, acts as an anti-CsrA protein, binds CsrA and prevents it from repressing translation of its target genes, one of which is flagellin. Binds to flagellin and participates in the assembly of the flagellum. This Geobacillus kaustophilus (strain HTA426) protein is Flagellar assembly factor FliW.